A 116-amino-acid polypeptide reads, in one-letter code: MRHQLRVPLLSKPADQRKALLRALTTQLIREGRITTTKARAKALRNEAERMISLAKEGTLSARRRALGYIYDKKLVHSLFEKAQERYGERNGGYTRIVRTVARKGDNAQMAIIELV.

The protein belongs to the bacterial ribosomal protein bL17 family. Part of the 50S ribosomal subunit. Contacts protein L32.

This is Large ribosomal subunit protein bL17 from Prochlorococcus marinus subsp. pastoris (strain CCMP1986 / NIES-2087 / MED4).